The sequence spans 209 residues: Ribonuclease HII (209 aa).

The RNase H type-2 domain occupies 7–198 (GPVAGVDEAG…VAKAHQEWLH (192 aa)). The a divalent metal cation site is built by Asp-13, Glu-14, and Asp-107.

It belongs to the RNase HII family. Mn(2+) is required as a cofactor. The cofactor is Mg(2+).

It is found in the cytoplasm. It catalyses the reaction Endonucleolytic cleavage to 5'-phosphomonoester.. Endonuclease that specifically degrades the RNA of RNA-DNA hybrids. The polypeptide is Ribonuclease HII (Corynebacterium glutamicum (strain ATCC 13032 / DSM 20300 / JCM 1318 / BCRC 11384 / CCUG 27702 / LMG 3730 / NBRC 12168 / NCIMB 10025 / NRRL B-2784 / 534)).